A 361-amino-acid chain; its full sequence is Phosphoserine aminotransferase (361 aa).

Arg-42 lines the L-glutamate pocket. Residues 76–77, Trp-102, Thr-152, Asp-172, and Gln-195 each bind pyridoxal 5'-phosphate; that span reads AT. An N6-(pyridoxal phosphate)lysine modification is found at Lys-196. Pyridoxal 5'-phosphate is bound at residue 237–238; it reads NT.

Belongs to the class-V pyridoxal-phosphate-dependent aminotransferase family. SerC subfamily. As to quaternary structure, homodimer. It depends on pyridoxal 5'-phosphate as a cofactor.

Its subcellular location is the cytoplasm. The catalysed reaction is O-phospho-L-serine + 2-oxoglutarate = 3-phosphooxypyruvate + L-glutamate. The enzyme catalyses 4-(phosphooxy)-L-threonine + 2-oxoglutarate = (R)-3-hydroxy-2-oxo-4-phosphooxybutanoate + L-glutamate. It functions in the pathway amino-acid biosynthesis; L-serine biosynthesis; L-serine from 3-phospho-D-glycerate: step 2/3. Its pathway is cofactor biosynthesis; pyridoxine 5'-phosphate biosynthesis; pyridoxine 5'-phosphate from D-erythrose 4-phosphate: step 3/5. Functionally, catalyzes the reversible conversion of 3-phosphohydroxypyruvate to phosphoserine and of 3-hydroxy-2-oxo-4-phosphonooxybutanoate to phosphohydroxythreonine. The chain is Phosphoserine aminotransferase from Stenotrophomonas maltophilia (strain R551-3).